We begin with the raw amino-acid sequence, 529 residues long: Glycylpeptide N-tetradecanoyltransferase 2 (529 aa).

The interval 1–82 (MAEDSESAAS…QEIKIQQSSK (82 aa)) is disordered. Acidic residues predominate over residues 15–32 (ELDDQDTCGIDGDNEEET). Position 38 is a phosphoserine (Ser38). The segment covering 46–57 (KKKKKKQKRKKE) has biased composition (basic residues). Polar residues predominate over residues 61–82 (SGGTKSDSASDSQEIKIQQSSK). Tetradecanoyl-CoA-binding residues include Trp153, Leu281, Val283, Ser289, Arg291, Val292, and Ala293.

This sequence belongs to the NMT family.

It localises to the cytoplasm. It is found in the membrane. It catalyses the reaction N-terminal glycyl-[protein] + tetradecanoyl-CoA = N-tetradecanoylglycyl-[protein] + CoA + H(+). The enzyme catalyses N-terminal glycyl-L-lysyl-[protein] + tetradecanoyl-CoA = N-terminal glycyl-(N(6)-tetradecanoyl)-L-lysyl-[protein] + CoA + H(+). Its function is as follows. Adds a myristoyl group to the N-terminal glycine residue of certain cellular and viral proteins. Also able to mediate N-terminal lysine myristoylation of proteins: catalyzes myristoylation of ARF6 on both 'Gly-2' and 'Lys-3'. Lysine myristoylation is required to maintain ARF6 on membranes during the GTPase cycle. This is Glycylpeptide N-tetradecanoyltransferase 2 (Nmt2) from Mus musculus (Mouse).